A 633-amino-acid polypeptide reads, in one-letter code: MDSASSMRNRSPLGVPEFSYSSQSVNNIRGIKSRNRSSIGHSITDPQVASRINAFYLSNVQSSIPFETDAIGPAYGIGDMIAPEMNDTQSLSASVTNMKKENFYSRPNVSSSSILLTIKRATSSQETKRDRPLPNIRNSAPSATRSHSTPCVAPGYLRTSNEAADVVFPHEEAHFSNHNPKPNNGSPLQKQVVADLPFPLPVSDEEQLDWIRANEDLVHSQDIDEALEWAEYVLRFTQSHLPYLQTYESENLHEINYLESMCENALYKIREFSELENAKAMYFDAYVYETGAFDVESDIQRAWDLYSSSANLGYTRSLYRLGVLLEDQGNLEEAVEYFEKGVSENDSACCWRLSLLILEGMLDGVGEYAHRHASGLELLERSADTADADVPSGLYSHALVNLHEHPGLVDLGSENIRVPIDEATALKSFAKAAFLGHSSAQLRMGAVYEFGKYGCPVVPRYSLFYYSAAAKRGETEADLAVAKWYLNGSDGIPVDEDLAFMHAERASMAGNANAQFLMGYLFDTRGNTEQATYWYNEAAKAGHSEAIERLALLENQIQEPEPENITSSQYPNQDVIKEIPVTASETSPPHAPAVSSTPVTSAPPVSQTKVTKVSVPKKTSKKFLIKHNKCIIS.

A disordered region spans residues 121–151; it reads ATSSQETKRDRPLPNIRNSAPSATRSHSTPC. Over residues 136 to 149 the composition is skewed to polar residues; that stretch reads IRNSAPSATRSHST. At Ser-148 the chain carries Phosphoserine. 5 Sel1-like repeats span residues 278–314, 315–346, 438–474, 475–511, and 512–543; these read AKAMYFDAYVYETGAFDVESDIQRAWDLYSSSANLGY, TRSLYRLGVLLEDQGNLEEAVEYFEKGVSEND, SSAQLRMGAVYEFGKYGCPVVPRYSLFYYSAAAKRGE, TEADLAVAKWYLNGSDGIPVDEDLAFMHAERASMAGN, and ANAQFLMGYLFDTRGNTEQATYWYNEAAKAGH. The disordered stretch occupies residues 583–613; the sequence is ASETSPPHAPAVSSTPVTSAPPVSQTKVTKV. Over residues 592 to 613 the composition is skewed to low complexity; it reads PAVSSTPVTSAPPVSQTKVTKV.

The protein localises to the cytoplasm. Involved in septum formation. Required for the proper localization of chs2 at the septum. The polypeptide is Chitin synthase regulatory factor 4 (chr4) (Schizosaccharomyces pombe (strain 972 / ATCC 24843) (Fission yeast)).